A 585-amino-acid polypeptide reads, in one-letter code: A-type ATP synthase subunit A (585 aa).

Residue 231–238 (GPFGSGKT) participates in ATP binding.

The protein belongs to the ATPase alpha/beta chains family. In terms of assembly, has multiple subunits with at least A(3), B(3), C, D, E, F, H, I and proteolipid K(x).

The protein localises to the cell membrane. The catalysed reaction is ATP + H2O + 4 H(+)(in) = ADP + phosphate + 5 H(+)(out). Functionally, component of the A-type ATP synthase that produces ATP from ADP in the presence of a proton gradient across the membrane. The A chain is the catalytic subunit. In Thermococcus onnurineus (strain NA1), this protein is A-type ATP synthase subunit A.